A 233-amino-acid chain; its full sequence is 5'-methylthioadenosine/S-adenosylhomocysteine nucleosidase (233 aa).

Glu-12 serves as the catalytic Proton acceptor. Residues Gly-78, Ile-153, and 174-175 (ME) contribute to the substrate site. Residue Asp-198 is the Proton donor of the active site.

This sequence belongs to the PNP/UDP phosphorylase family. MtnN subfamily.

It catalyses the reaction S-adenosyl-L-homocysteine + H2O = S-(5-deoxy-D-ribos-5-yl)-L-homocysteine + adenine. It carries out the reaction S-methyl-5'-thioadenosine + H2O = 5-(methylsulfanyl)-D-ribose + adenine. The catalysed reaction is 5'-deoxyadenosine + H2O = 5-deoxy-D-ribose + adenine. It participates in amino-acid biosynthesis; L-methionine biosynthesis via salvage pathway; S-methyl-5-thio-alpha-D-ribose 1-phosphate from S-methyl-5'-thioadenosine (hydrolase route): step 1/2. Its function is as follows. Catalyzes the irreversible cleavage of the glycosidic bond in both 5'-methylthioadenosine (MTA) and S-adenosylhomocysteine (SAH/AdoHcy) to adenine and the corresponding thioribose, 5'-methylthioribose and S-ribosylhomocysteine, respectively. Also cleaves 5'-deoxyadenosine, a toxic by-product of radical S-adenosylmethionine (SAM) enzymes, into 5-deoxyribose and adenine. This Exiguobacterium sp. (strain ATCC BAA-1283 / AT1b) protein is 5'-methylthioadenosine/S-adenosylhomocysteine nucleosidase.